A 223-amino-acid polypeptide reads, in one-letter code: Small ribosomal subunit protein uS5 (223 aa).

Residues 1–48 (MPGRQRRDGGSGPAGQNGPNSGDNSNARGDNRGGGRDRRDGGRGGNAA) are disordered. Over residues 29 to 42 (GDNRGGGRDRRDGG) the composition is skewed to basic and acidic residues. An S5 DRBM domain is found at 53-116 (FIERVVTINR…EEARKSFFRV (64 aa)).

Belongs to the universal ribosomal protein uS5 family. As to quaternary structure, part of the 30S ribosomal subunit. Contacts proteins S4 and S8.

Its function is as follows. With S4 and S12 plays an important role in translational accuracy. In terms of biological role, located at the back of the 30S subunit body where it stabilizes the conformation of the head with respect to the body. The polypeptide is Small ribosomal subunit protein uS5 (Rhodococcus erythropolis (strain PR4 / NBRC 100887)).